The chain runs to 215 residues: Vesicle transport protein SFT2C (215 aa).

Over 1–82 (MADLHRQLQE…RGQRLAAGGG (82 aa)) the chain is Cytoplasmic. A helical transmembrane segment spans residues 83–103 (CLLLAALCFGLAALYAPVLLL). The Lumenal portion of the chain corresponds to 104-107 (RARK). Residues 108–128 (FALLWSLGSALALAGSALLRG) traverse the membrane as a helical segment. At 129–142 (GAACGRLLRCEEAP) the chain is on the cytoplasmic side. A helical membrane pass occupies residues 143–163 (SRPALLYMAALGATLFAALGL). Residues 164-166 (RST) lie on the Lumenal side of the membrane. A helical membrane pass occupies residues 167-187 (LLTVLGAGAQVAALLAALVGL). Over 188–215 (LPWGGGTALRLALGRLGRGAGLAKVLPV) the chain is Cytoplasmic.

It belongs to the SFT2 family.

It is found in the membrane. Functionally, may be involved in fusion of retrograde transport vesicles derived from an endocytic compartment with the Golgi complex. The polypeptide is Vesicle transport protein SFT2C (Homo sapiens (Human)).